A 150-amino-acid polypeptide reads, in one-letter code: Large ribosomal subunit protein bL9 (150 aa).

The protein belongs to the bacterial ribosomal protein bL9 family.

Its function is as follows. Binds to the 23S rRNA. This is Large ribosomal subunit protein bL9 from Shewanella loihica (strain ATCC BAA-1088 / PV-4).